The chain runs to 181 residues: uncharacterized protein (181 aa).

2 stretches are compositionally biased toward gly residues: residues 143–156 and 170–181; these read RRGG…GPRG and GPFGPGYRGPRF. The segment at 143 to 181 is disordered; sequence RRGGRYGDFGGPRGPRGPRNDGPFGPFGPFGPGYRGPRF.

In terms of assembly, has been detected in a cytochrome bc1-aa3 supercomplex; its deletion however leaves complex activity unaffected.

This is an uncharacterized protein from Corynebacterium glutamicum (strain ATCC 13032 / DSM 20300 / JCM 1318 / BCRC 11384 / CCUG 27702 / LMG 3730 / NBRC 12168 / NCIMB 10025 / NRRL B-2784 / 534).